The chain runs to 261 residues: Thiamine thiazole synthase (261 aa).

NAD(+) contacts are provided by residues serine 33, 52–53 (ER), glycine 60, valine 124, and 152–154 (HVD). Fe cation is bound by residues aspartate 154 and histidine 169. Methionine 219 is an NAD(+) binding site. Glycine is bound at residue arginine 229.

Belongs to the THI4 family. Homooctamer; tetramer of dimers. It depends on Fe(2+) as a cofactor.

It catalyses the reaction hydrogen sulfide + glycine + NAD(+) = ADP-5-ethyl-4-methylthiazole-2-carboxylate + nicotinamide + 3 H2O + H(+). The protein operates within cofactor biosynthesis; thiamine diphosphate biosynthesis. Its function is as follows. Involved in the biosynthesis of the thiazole moiety of thiamine. Catalyzes the conversion of NAD and glycine to adenosine diphosphate 5-(2-hydroxyethyl)-4-methylthiazole-2-carboxylate (ADT), an adenylated thiazole intermediate, using free sulfide as a source of sulfur. The polypeptide is Thiamine thiazole synthase (Pyrobaculum arsenaticum (strain DSM 13514 / JCM 11321 / PZ6)).